We begin with the raw amino-acid sequence, 429 residues long: MDRIRIVGGNKLNGTIPISGAKNAALPLMIAALLTEETLILDNVPRLADVAQLQRILGNHGVDIMSAGKRSGDHEYQGQTLHISAANVIDTTAPYELVSKMRASFWVIAPLLARMHETKVSLPGGCAIGTRPVDLLIMALEKLGAEVAIDGGYVIAKAPGGLTGAEVDFPKVTVSGTHVALMAATLAKGTTVITNAACEPEIVDVADCLNKMGARVSGAGTPRIVIEGVSRLGGARHTVLPDRIETGTYAMAVAMTGGDVLLRGARPELLQSALDVLTEAGAVITPNNEGIRVARNGAGINPVIVSTAPFPGFPTDLQAQLMALMTRAKGSSHITETIFENRFMHVQELARFGARIHLDGETATIEGIGILRGAPVMATDLRASVSLVIAGLAAEGETMVNRVYHLDRGFERLEEKLSGCGASIERISD.

A phosphoenolpyruvate-binding site is contributed by K22–N23. UDP-N-acetyl-alpha-D-glucosamine is bound at residue R102. The active-site Proton donor is C126. C126 carries the post-translational modification 2-(S-cysteinyl)pyruvic acid O-phosphothioketal. UDP-N-acetyl-alpha-D-glucosamine contacts are provided by residues R131–L135, D316, and I338.

This sequence belongs to the EPSP synthase family. MurA subfamily.

Its subcellular location is the cytoplasm. It carries out the reaction phosphoenolpyruvate + UDP-N-acetyl-alpha-D-glucosamine = UDP-N-acetyl-3-O-(1-carboxyvinyl)-alpha-D-glucosamine + phosphate. It participates in cell wall biogenesis; peptidoglycan biosynthesis. Functionally, cell wall formation. Adds enolpyruvyl to UDP-N-acetylglucosamine. In Nitrobacter hamburgensis (strain DSM 10229 / NCIMB 13809 / X14), this protein is UDP-N-acetylglucosamine 1-carboxyvinyltransferase.